We begin with the raw amino-acid sequence, 253 residues long: Imidazole glycerol phosphate synthase subunit HisF (253 aa).

Residues Asp-11 and Asp-130 contribute to the active site.

The protein belongs to the HisA/HisF family. Heterodimer of HisH and HisF.

It localises to the cytoplasm. It carries out the reaction 5-[(5-phospho-1-deoxy-D-ribulos-1-ylimino)methylamino]-1-(5-phospho-beta-D-ribosyl)imidazole-4-carboxamide + L-glutamine = D-erythro-1-(imidazol-4-yl)glycerol 3-phosphate + 5-amino-1-(5-phospho-beta-D-ribosyl)imidazole-4-carboxamide + L-glutamate + H(+). It functions in the pathway amino-acid biosynthesis; L-histidine biosynthesis; L-histidine from 5-phospho-alpha-D-ribose 1-diphosphate: step 5/9. IGPS catalyzes the conversion of PRFAR and glutamine to IGP, AICAR and glutamate. The HisF subunit catalyzes the cyclization activity that produces IGP and AICAR from PRFAR using the ammonia provided by the HisH subunit. In Methylibium petroleiphilum (strain ATCC BAA-1232 / LMG 22953 / PM1), this protein is Imidazole glycerol phosphate synthase subunit HisF.